Consider the following 630-residue polypeptide: Ankyrin repeat protein OPG025 (630 aa).

6 ANK repeats span residues 36–69, 70–100, 103–134, 174–210, 338–367, and 408–437; these read DGETPLKAYVTKKNNNIKNDVVILLLSSVDYKNI, NDFDIFEYLCSDNIDIDLLKLLISKGIEINS, NGINIVEKYATTSNPNIDVFKLLLDKGIPTCS, MGKTVLYYYIITRSQDGYVTSLDVINYLISHENEMCH, KHINKYFKRFDNRDPKVVEYILKNGNVVVN, and HGRSILYYCIESHSVALIEWLIDNGADINI.

Belongs to the orthopoxvirus OPG025 family. As to quaternary structure, interacts with components of host SCF complex CUL1 and SKP1 and components of the cullin deneddylation/COP9 signalosome complex subunits COPS7A and COPS7B.

Its function is as follows. Plays a role in the inhibition of host immune repsonse by counteracting the action of interferons on early events in the viral replication cycle. The chain is Ankyrin repeat protein OPG025 (OPG025) from Monkeypox virus.